The primary structure comprises 278 residues: Tryptophan synthase alpha chain (278 aa).

Residues glutamate 50 and aspartate 61 each act as proton acceptor in the active site.

It belongs to the TrpA family. As to quaternary structure, tetramer of two alpha and two beta chains.

The enzyme catalyses (1S,2R)-1-C-(indol-3-yl)glycerol 3-phosphate + L-serine = D-glyceraldehyde 3-phosphate + L-tryptophan + H2O. Its pathway is amino-acid biosynthesis; L-tryptophan biosynthesis; L-tryptophan from chorismate: step 5/5. In terms of biological role, the alpha subunit is responsible for the aldol cleavage of indoleglycerol phosphate to indole and glyceraldehyde 3-phosphate. The protein is Tryptophan synthase alpha chain of Nitrobacter winogradskyi (strain ATCC 25391 / DSM 10237 / CIP 104748 / NCIMB 11846 / Nb-255).